The chain runs to 353 residues: Nicotinate-nucleotide--dimethylbenzimidazole phosphoribosyltransferase (353 aa).

Residue E318 is the Proton acceptor of the active site.

It belongs to the CobT family.

The catalysed reaction is 5,6-dimethylbenzimidazole + nicotinate beta-D-ribonucleotide = alpha-ribazole 5'-phosphate + nicotinate + H(+). The protein operates within nucleoside biosynthesis; alpha-ribazole biosynthesis; alpha-ribazole from 5,6-dimethylbenzimidazole: step 1/2. Catalyzes the synthesis of alpha-ribazole-5'-phosphate from nicotinate mononucleotide (NAMN) and 5,6-dimethylbenzimidazole (DMB). The protein is Nicotinate-nucleotide--dimethylbenzimidazole phosphoribosyltransferase of Geobacter metallireducens (strain ATCC 53774 / DSM 7210 / GS-15).